The following is a 350-amino-acid chain: Hydroxymethylglutaryl-CoA synthase (350 aa).

Residues aspartate 33 and valine 34 each contribute to the (3S)-3-hydroxy-3-methylglutaryl-CoA site. Residue glutamate 85 is the Proton donor/acceptor of the active site. 2 residues coordinate (3S)-3-hydroxy-3-methylglutaryl-CoA: cysteine 117 and threonine 158. Cysteine 117 serves as the catalytic Acyl-thioester intermediate. Arginine 204 serves as a coordination point for CoA. Residues threonine 206 and histidine 239 each coordinate (3S)-3-hydroxy-3-methylglutaryl-CoA. Residue histidine 239 is the Proton donor/acceptor of the active site. CoA is bound at residue lysine 244. Lysine 248, asparagine 271, and serine 301 together coordinate (3S)-3-hydroxy-3-methylglutaryl-CoA.

The protein belongs to the thiolase-like superfamily. Archaeal HMG-CoA synthase family. Interacts with acetoacetyl-CoA thiolase that catalyzes the precedent step in the pathway and with a DUF35 protein. The acetoacetyl-CoA thiolase/HMG-CoA synthase complex channels the intermediate via a fused CoA-binding site, which allows for efficient coupling of the endergonic thiolase reaction with the exergonic HMGCS reaction.

It catalyses the reaction acetoacetyl-CoA + acetyl-CoA + H2O = (3S)-3-hydroxy-3-methylglutaryl-CoA + CoA + H(+). The protein operates within metabolic intermediate biosynthesis; (R)-mevalonate biosynthesis; (R)-mevalonate from acetyl-CoA: step 2/3. In terms of biological role, catalyzes the condensation of acetyl-CoA with acetoacetyl-CoA to form 3-hydroxy-3-methylglutaryl-CoA (HMG-CoA). Functions in the mevalonate (MVA) pathway leading to isopentenyl diphosphate (IPP), a key precursor for the biosynthesis of isoprenoid compounds that are building blocks of archaeal membrane lipids. This is Hydroxymethylglutaryl-CoA synthase from Methanopyrus kandleri (strain AV19 / DSM 6324 / JCM 9639 / NBRC 100938).